The primary structure comprises 259 residues: Ribosomal RNA small subunit methyltransferase J (259 aa).

S-adenosyl-L-methionine contacts are provided by residues 101-102 (RD), 117-118 (ER), 153-154 (SS), and D176.

It belongs to the methyltransferase superfamily. RsmJ family.

It is found in the cytoplasm. The enzyme catalyses guanosine(1516) in 16S rRNA + S-adenosyl-L-methionine = N(2)-methylguanosine(1516) in 16S rRNA + S-adenosyl-L-homocysteine + H(+). Specifically methylates the guanosine in position 1516 of 16S rRNA. This Aliivibrio fischeri (strain ATCC 700601 / ES114) (Vibrio fischeri) protein is Ribosomal RNA small subunit methyltransferase J.